The following is a 133-amino-acid chain: Large ribosomal subunit protein uL14m (133 aa).

This sequence belongs to the universal ribosomal protein uL14 family. In terms of assembly, probably part of the large ribosomal subunit.

The protein resides in the hydrogenosome. This Nyctotherus ovalis protein is Large ribosomal subunit protein uL14m (rpl14).